The following is a 289-amino-acid chain: Phenylalanine-4-hydroxylase (289 aa).

Positions 144, 149, and 189 each coordinate Fe cation.

It belongs to the biopterin-dependent aromatic amino acid hydroxylase family. Requires Fe(2+) as cofactor.

It carries out the reaction (6R)-L-erythro-5,6,7,8-tetrahydrobiopterin + L-phenylalanine + O2 = (4aS,6R)-4a-hydroxy-L-erythro-5,6,7,8-tetrahydrobiopterin + L-tyrosine. Its pathway is amino-acid degradation; L-phenylalanine degradation; acetoacetate and fumarate from L-phenylalanine: step 1/6. The protein is Phenylalanine-4-hydroxylase (phhA) of Vibrio cholerae serotype O1 (strain ATCC 39315 / El Tor Inaba N16961).